The sequence spans 351 residues: DNA polymerase IV (351 aa).

Residues 4–185 (IIHVDMDCFF…LPLAKIPGVG (182 aa)) form the UmuC domain. Residues aspartate 8 and aspartate 103 each contribute to the Mg(2+) site. The active site involves glutamate 104.

The protein belongs to the DNA polymerase type-Y family. Monomer. Mg(2+) is required as a cofactor.

It localises to the cytoplasm. The enzyme catalyses DNA(n) + a 2'-deoxyribonucleoside 5'-triphosphate = DNA(n+1) + diphosphate. In terms of biological role, poorly processive, error-prone DNA polymerase involved in untargeted mutagenesis. Copies undamaged DNA at stalled replication forks, which arise in vivo from mismatched or misaligned primer ends. These misaligned primers can be extended by PolIV. Exhibits no 3'-5' exonuclease (proofreading) activity. May be involved in translesional synthesis, in conjunction with the beta clamp from PolIII. The sequence is that of DNA polymerase IV from Escherichia coli O9:H4 (strain HS).